We begin with the raw amino-acid sequence, 188 residues long: Putative protein SSX6 (188 aa).

Disordered stretches follow at residues 1 to 22 (MNGDDAFAKRPRDDAKASEKRS) and 74 to 188 (KRAT…EDDK). Residues 20–83 (KRSKAFDDIA…KRATDSQRND (64 aa)) form the KRAB-related domain. 2 stretches are compositionally biased toward basic and acidic residues: residues 75–96 (RATDSQRNDSDNDRNRGNEVER) and 112–122 (MPEKPAEEGSD). A Phosphoserine modification is found at Ser123. Positions 147 to 156 (SSEKIHERSG) are enriched in basic and acidic residues. A compositionally biased stretch (basic residues) spans 157-170 (PKRGKHAWTHRLRE). Positions 179–188 (EISDPEEDDK) are enriched in acidic residues.

Belongs to the SSX family. In terms of tissue distribution, not detected in any normal tissues. Expressed in a melanoma cell line.

In terms of biological role, could act as a modulator of transcription. The protein is Putative protein SSX6 of Homo sapiens (Human).